A 116-amino-acid polypeptide reads, in one-letter code: Spexin (116 aa).

Positions 1–26 (MKGPSVLAVTAVVLLLVLSALENSSG) are cleaved as a signal peptide. Residues 27 to 35 (APQRLSEKR) constitute a propeptide that is removed on maturation. Position 49 is a glutamine amide (Gln49). 2 propeptides span residues 50–116 (GRRF…LFNW) and 74–116 (PDLE…LFNW). The disordered stretch occupies residues 52 to 77 (RFLSDQSRRKELADRPPPERRNPDLE). Basic and acidic residues predominate over residues 53 to 75 (FLSDQSRRKELADRPPPERRNPD).

The protein belongs to the spexin family.

The protein localises to the secreted. Its subcellular location is the extracellular space. It is found in the cytoplasmic vesicle. It localises to the secretory vesicle. In terms of biological role, plays a role as a central modulator of cardiovascular and renal function and nociception. Also plays a role in energy metabolism and storage. Inhibits adrenocortical cell proliferation with minor stimulation on corticosteroid release. Its function is as follows. Acts as a ligand for galanin receptors GALR2 and GALR3. Intracerebroventricular administration of the peptide induces an increase in arterial blood pressure, a decrease in both heart rate and renal excretion and delayed natriuresis. Intraventricular administration of the peptide induces antinociceptive activity. Also induces contraction of muscarinic-like stomach smooth muscles. Intraperitoneal administration of the peptide induces a reduction in food consumption and body weight. Inhibits long chain fatty acid uptake into adipocytes. Intracerebroventricular administration of the peptide induces a decrease in heart rate, but no change in arterial pressure, and an increase in urine flow rate. Intraventricular administration of the peptide induces antinociceptive activity. This chain is Spexin (Spx), found in Mus musculus (Mouse).